The primary structure comprises 224 residues: 2-C-methyl-D-erythritol 4-phosphate cytidylyltransferase (224 aa).

Belongs to the IspD/TarI cytidylyltransferase family. IspD subfamily.

It catalyses the reaction 2-C-methyl-D-erythritol 4-phosphate + CTP + H(+) = 4-CDP-2-C-methyl-D-erythritol + diphosphate. Its pathway is isoprenoid biosynthesis; isopentenyl diphosphate biosynthesis via DXP pathway; isopentenyl diphosphate from 1-deoxy-D-xylulose 5-phosphate: step 2/6. Functionally, catalyzes the formation of 4-diphosphocytidyl-2-C-methyl-D-erythritol from CTP and 2-C-methyl-D-erythritol 4-phosphate (MEP). This Clostridium botulinum (strain Eklund 17B / Type B) protein is 2-C-methyl-D-erythritol 4-phosphate cytidylyltransferase.